Here is a 52-residue protein sequence, read N- to C-terminus: UPF0391 membrane protein Tgr7_2500 (52 aa).

A run of 2 helical transmembrane segments spans residues 4–24 (WALIFLIVAIIAGTLGFSGVA) and 29–49 (WIAQVLFLVFLALLVISLLGG).

This sequence belongs to the UPF0391 family.

Its subcellular location is the cell membrane. This is UPF0391 membrane protein Tgr7_2500 from Thioalkalivibrio sulfidiphilus (strain HL-EbGR7).